A 434-amino-acid polypeptide reads, in one-letter code: MPITKIHARQIYDSRGNPTVEVDLFTEKGVFRAAVPSGASTGVHEALELRDGDKAVHLGKGVLKAVSNINEKIAPALIAKGFDVTAQKDIDDFMMALDGSENKGNLGANAILGVSLAVAKAGAVHKGLPLYKYIAELAGTGKVVLPVPAFNVINGGSHAGNKLAMQEFMILPVGASSFAEAMRMGSEVYHHLKAEIKKRYGLDATAVGDEGGFAPNIQDNKEGLDLLNTAIDKAGYTGKISIGMDVAASEFFKDGKYDLDFKNPASDSSKWLSGEQLTELYQSFIKEYPVVSIEDAFDQDDWDNWGKFHGATSIQLVGDDLTVTNPKRIQTAIDKKSCNCLLLKVNQIGSVTESIEAAKLSRANGWGVMVSHRSGETEDTFIADLVVGLATGQIKTGAPCRSERLAKYNQLLRIEEELGADAVYAGHNFRNPQV.

Substrate is bound by residues H158 and E167. E210 acts as the Proton donor in catalysis. Mg(2+)-binding residues include D245, E294, and D319. Residues E294 and D319 each coordinate substrate. K344 functions as the Proton acceptor in the catalytic mechanism. Substrate is bound by residues 371–374 (SHRS) and K395.

It belongs to the enolase family. In terms of assembly, homodimer. It depends on Mg(2+) as a cofactor.

It is found in the cytoplasm. The catalysed reaction is (2R)-2-phosphoglycerate = phosphoenolpyruvate + H2O. It participates in carbohydrate degradation; glycolysis; pyruvate from D-glyceraldehyde 3-phosphate: step 4/5. The protein is Enolase of Caenorhabditis elegans.